The following is a 181-amino-acid chain: Adenylate kinase (181 aa).

10–15 (GAGKGT) contacts ATP. Residues 30-59 (STGELFRSNIENGTKLGLEAKRYLDAGDLV) are NMP. AMP is bound by residues Thr-31, Arg-36, 57-59 (DLV), 85-88 (GFPR), and Gln-92. The segment at 126–132 (ARGRADD) is LID. Arg-127 lines the ATP pocket. AMP is bound by residues Arg-129 and Arg-140. Position 166 (Gly-166) interacts with ATP.

The protein belongs to the adenylate kinase family. As to quaternary structure, monomer.

Its subcellular location is the cytoplasm. It carries out the reaction AMP + ATP = 2 ADP. It functions in the pathway purine metabolism; AMP biosynthesis via salvage pathway; AMP from ADP: step 1/1. Functionally, catalyzes the reversible transfer of the terminal phosphate group between ATP and AMP. Plays an important role in cellular energy homeostasis and in adenine nucleotide metabolism. The sequence is that of Adenylate kinase from Mycolicibacterium paratuberculosis (strain ATCC BAA-968 / K-10) (Mycobacterium paratuberculosis).